The following is a 224-amino-acid chain: Homeobox protein Hox-B6 (224 aa).

The short motif at 127 to 132 (VYPWMQ) is the Antp-type hexapeptide element. Residues 146–205 (GRRGRQTYTRYQTLELEKEFHYNRYLTRRRRIEIAHALCLTERQIKIWFQNRRMKWKKES) constitute a DNA-binding region (homeobox). Position 214 is a phosphoserine (Ser214).

It belongs to the Antp homeobox family.

Its subcellular location is the nucleus. Its function is as follows. Sequence-specific transcription factor which is part of a developmental regulatory system that provides cells with specific positional identities on the anterior-posterior axis. The chain is Homeobox protein Hox-B6 (HOXB6) from Homo sapiens (Human).